The following is a 150-amino-acid chain: 3-hydroxyacyl-[acyl-carrier-protein] dehydratase FabZ (150 aa).

Residue His51 is part of the active site.

It belongs to the thioester dehydratase family. FabZ subfamily.

The protein resides in the cytoplasm. It carries out the reaction a (3R)-hydroxyacyl-[ACP] = a (2E)-enoyl-[ACP] + H2O. Functionally, involved in unsaturated fatty acids biosynthesis. Catalyzes the dehydration of short chain beta-hydroxyacyl-ACPs and long chain saturated and unsaturated beta-hydroxyacyl-ACPs. The chain is 3-hydroxyacyl-[acyl-carrier-protein] dehydratase FabZ from Geobacter metallireducens (strain ATCC 53774 / DSM 7210 / GS-15).